The following is a 593-amino-acid chain: ATP-dependent lipid A-core flippase (593 aa).

The next 6 helical transmembrane spans lie at 33 to 55, 67 to 87, 146 to 166, 169 to 189, 258 to 278, and 284 to 304; these read YIFL…YGFG, ILML…VGSF, AIIT…VMFV, WQLS…ISII, VIQI…AIFG, and GSSW…AAIL. The ABC transmembrane type-1 domain occupies 38–319; sequence ADASMIYLIN…LTKVNVVIQK (282 aa). The ABC transporter domain maps to 351 to 585; the sequence is VTIKDLSFAF…GGLYTGSINR (235 aa). 383 to 390 is a binding site for ATP; it reads GKSGSGKT.

Belongs to the ABC transporter superfamily. Lipid exporter (TC 3.A.1.106) family. In terms of assembly, homodimer.

The protein resides in the cell membrane. The enzyme catalyses ATP + H2O + lipid A-core oligosaccharideSide 1 = ADP + phosphate + lipid A-core oligosaccharideSide 2.. Its function is as follows. Involved in lipopolysaccharide (LPS) biosynthesis. Translocates lipid A-core from the inner to the outer leaflet of the inner membrane. Transmembrane domains (TMD) form a pore in the inner membrane and the ATP-binding domain (NBD) is responsible for energy generation. This chain is ATP-dependent lipid A-core flippase, found in Francisella novicida.